The chain runs to 334 residues: 4-hydroxy-2-methyl-3-oxo-4-farnesyl-3,4-dihydroquinoline-1-oxide ketoreductase (334 aa).

The Proton donor role is filled by Tyr-139.

Belongs to the 3-beta-HSD family.

It catalyses the reaction aurachin B + NAD(+) + H2O = 4-hydroxy-2-methyl-3-oxo-4-[(2E,6E)-farnesyl]-3,4-dihydroquinoline 1-oxide + NADH. The catalysed reaction is 3,4-dihydroxy-2-methyl-4-[(2E,6E)-farnesyl]-3,4-dihydroquinoline 1-oxide + NAD(+) = 4-hydroxy-2-methyl-3-oxo-4-[(2E,6E)-farnesyl]-3,4-dihydroquinoline 1-oxide + NADH + H(+). Functionally, ketoreductase that catalyzes the final step in the conversion of aurachin C to aurachin B. Catalyzes the reduction of 4-hydroxy-2-methyl-3-oxo-4-[(2E,6E)-farnesyl]-3,4-dihydroquinoline-1-oxide to form 3,4-dihydroxy-2-methyl-4-[(2E,6E)-farnesyl]-3,4-dihydroquinoline 1-oxide, which then undergoes a spontaneous dehydration to form aurachin B. Accepts both NADH and NADPH, but has a preference for NADH. In Stigmatella aurantiaca, this protein is 4-hydroxy-2-methyl-3-oxo-4-farnesyl-3,4-dihydroquinoline-1-oxide ketoreductase.